We begin with the raw amino-acid sequence, 318 residues long: Putative S-adenosyl-L-methionine-dependent methyltransferase BCG_0781c (318 aa).

S-adenosyl-L-methionine contacts are provided by residues Asp135 and 164–165 (DL).

Belongs to the UPF0677 family.

Functionally, exhibits S-adenosyl-L-methionine-dependent methyltransferase activity. This is Putative S-adenosyl-L-methionine-dependent methyltransferase BCG_0781c from Mycobacterium bovis (strain BCG / Pasteur 1173P2).